The sequence spans 1058 residues: Carbamoyl phosphate synthase large chain (1058 aa).

Residues 1-401 (MPKRTDIQKI…SLLKACRSLE (401 aa)) form a carboxyphosphate synthetic domain region. Arginine 129, arginine 169, glycine 175, glycine 176, arginine 208, isoleucine 210, glutamate 215, glycine 241, isoleucine 242, histidine 243, glutamine 284, and glutamate 298 together coordinate ATP. Positions 133–327 (KQLMEELEQP…IAKLAAKIAV (195 aa)) constitute an ATP-grasp 1 domain. Positions 284, 298, and 300 each coordinate Mg(2+). The Mn(2+) site is built by glutamine 284, glutamate 298, and asparagine 300. The segment at 402–546 (IGVHHNEIPE…YSTYGWENES (145 aa)) is oligomerization domain. Residues 547–929 (IRSDKESVLV…ALYKAFEASY (383 aa)) are carbamoyl phosphate synthetic domain. In terms of domain architecture, ATP-grasp 2 spans 671–861 (EQALKELDIP…MAQVATKLIL (191 aa)). Residues arginine 707, serine 746, isoleucine 748, glutamate 752, glycine 777, valine 778, histidine 779, serine 780, glutamine 820, and glutamate 832 each contribute to the ATP site. Mg(2+) contacts are provided by glutamine 820, glutamate 832, and asparagine 834. Mn(2+) is bound by residues glutamine 820, glutamate 832, and asparagine 834. Residues 930–1058 (LHLPTFGNVV…ESRSFVTEAI (129 aa)) enclose the MGS-like domain. The allosteric domain stretch occupies residues 930–1058 (LHLPTFGNVV…ESRSFVTEAI (129 aa)).

Belongs to the CarB family. In terms of assembly, composed of two chains; the small (or glutamine) chain promotes the hydrolysis of glutamine to ammonia, which is used by the large (or ammonia) chain to synthesize carbamoyl phosphate. Tetramer of heterodimers (alpha,beta)4. Mg(2+) is required as a cofactor. Mn(2+) serves as cofactor.

The catalysed reaction is hydrogencarbonate + L-glutamine + 2 ATP + H2O = carbamoyl phosphate + L-glutamate + 2 ADP + phosphate + 2 H(+). It catalyses the reaction hydrogencarbonate + NH4(+) + 2 ATP = carbamoyl phosphate + 2 ADP + phosphate + 2 H(+). The protein operates within amino-acid biosynthesis; L-arginine biosynthesis; carbamoyl phosphate from bicarbonate: step 1/1. Its pathway is pyrimidine metabolism; UMP biosynthesis via de novo pathway; (S)-dihydroorotate from bicarbonate: step 1/3. Functionally, large subunit of the glutamine-dependent carbamoyl phosphate synthetase (CPSase). CPSase catalyzes the formation of carbamoyl phosphate from the ammonia moiety of glutamine, carbonate, and phosphate donated by ATP, constituting the first step of 2 biosynthetic pathways, one leading to arginine and/or urea and the other to pyrimidine nucleotides. The large subunit (synthetase) binds the substrates ammonia (free or transferred from glutamine from the small subunit), hydrogencarbonate and ATP and carries out an ATP-coupled ligase reaction, activating hydrogencarbonate by forming carboxy phosphate which reacts with ammonia to form carbamoyl phosphate. The sequence is that of Carbamoyl phosphate synthase large chain from Streptococcus pneumoniae (strain Hungary19A-6).